A 327-amino-acid polypeptide reads, in one-letter code: GMP reductase (327 aa).

Catalysis depends on Cys-175, which acts as the Thioimidate intermediate. 204–227 provides a ligand contact to NADP(+); the sequence is IIADGGIRTNGDVAKSIRFGATMV.

Belongs to the IMPDH/GMPR family. GuaC type 2 subfamily.

It catalyses the reaction IMP + NH4(+) + NADP(+) = GMP + NADPH + 2 H(+). Catalyzes the irreversible NADPH-dependent deamination of GMP to IMP. It functions in the conversion of nucleobase, nucleoside and nucleotide derivatives of G to A nucleotides, and in maintaining the intracellular balance of A and G nucleotides. In Bacillus cereus (strain ZK / E33L), this protein is GMP reductase.